Here is a 147-residue protein sequence, read N- to C-terminus: Large ribosomal subunit protein uL22 (147 aa).

The disordered stretch occupies residues 110 to 147; that stretch reads EEKKTVAKKAPAAKKTTTTKAPAKKTTSTKKATAKKES. Over residues 117–140 the composition is skewed to low complexity; the sequence is KKAPAAKKTTTTKAPAKKTTSTKK.

It belongs to the universal ribosomal protein uL22 family. Part of the 50S ribosomal subunit.

Functionally, this protein binds specifically to 23S rRNA; its binding is stimulated by other ribosomal proteins, e.g. L4, L17, and L20. It is important during the early stages of 50S assembly. It makes multiple contacts with different domains of the 23S rRNA in the assembled 50S subunit and ribosome. The globular domain of the protein is located near the polypeptide exit tunnel on the outside of the subunit, while an extended beta-hairpin is found that lines the wall of the exit tunnel in the center of the 70S ribosome. In Campylobacter jejuni subsp. jejuni serotype O:23/36 (strain 81-176), this protein is Large ribosomal subunit protein uL22.